The following is a 149-amino-acid chain: Calmodulin (149 aa).

At Ala-2 the chain carries N-acetylalanine. EF-hand domains follow at residues Glu-8 to Asn-43, Pro-44 to Asp-79, Asp-81 to Lys-116, and Leu-117 to Lys-149. The Ca(2+) site is built by Asp-21, Asp-23, Asp-25, Thr-27, Glu-32, Asp-57, Asp-59, Asn-61, Thr-63, Glu-68, Asp-94, Asp-96, Asn-98, and Glu-105. An N6,N6,N6-trimethyllysine modification is found at Lys-116. The Ca(2+) site is built by Asp-130, Asp-132, Asp-134, His-136, and Glu-141.

Belongs to the calmodulin family.

Functionally, calmodulin mediates the control of a large number of enzymes, ion channels and other proteins by Ca(2+). Among the enzymes to be stimulated by the calmodulin-Ca(2+) complex are a number of protein kinases and phosphatases. This is Calmodulin from Tetrahymena pyriformis.